The primary structure comprises 522 residues: Ribonuclease Y (522 aa).

The chain crosses the membrane as a helical span at residues 2 to 22 (WVEILVGSSAAIISGAAGYLL). The 67-residue stretch at 212 to 278 (LINTVSIPSE…TKVIELLVED (67 aa)) folds into the KH domain. Positions 338-431 (ALGHSLEVAH…VCAADTLSAA (94 aa)) constitute an HD domain.

It belongs to the RNase Y family.

It localises to the cell membrane. Its function is as follows. Endoribonuclease that initiates mRNA decay. The polypeptide is Ribonuclease Y (Nitratiruptor sp. (strain SB155-2)).